Reading from the N-terminus, the 651-residue chain is DNA ligase (651 aa).

Residues 32-36, 75-76, and glutamate 106 each bind NAD(+); these read DAEYD and SL. The active-site N6-AMP-lysine intermediate is the lysine 108. Arginine 129, glutamate 164, lysine 271, and lysine 295 together coordinate NAD(+). Cysteine 389, cysteine 392, cysteine 405, and cysteine 411 together coordinate Zn(2+). The 77-residue stretch at 575 to 651 folds into the BRCT domain; it reads SSDSFLNNKI…LDEEQWNRLC (77 aa).

This sequence belongs to the NAD-dependent DNA ligase family. LigA subfamily. Mg(2+) serves as cofactor. Mn(2+) is required as a cofactor.

The catalysed reaction is NAD(+) + (deoxyribonucleotide)n-3'-hydroxyl + 5'-phospho-(deoxyribonucleotide)m = (deoxyribonucleotide)n+m + AMP + beta-nicotinamide D-nucleotide.. In terms of biological role, DNA ligase that catalyzes the formation of phosphodiester linkages between 5'-phosphoryl and 3'-hydroxyl groups in double-stranded DNA using NAD as a coenzyme and as the energy source for the reaction. It is essential for DNA replication and repair of damaged DNA. The polypeptide is DNA ligase (Wolbachia pipientis subsp. Culex pipiens (strain wPip)).